A 240-amino-acid chain; its full sequence is Probable transcriptional regulatory protein MXAN_7062 (240 aa).

It belongs to the TACO1 family.

Its subcellular location is the cytoplasm. In Myxococcus xanthus (strain DK1622), this protein is Probable transcriptional regulatory protein MXAN_7062.